Here is a 325-residue protein sequence, read N- to C-terminus: L-lactate dehydrogenase (325 aa).

Residues Val-19, Asp-40, Lys-45, Tyr-70, and 84 to 85 (GA) contribute to the NAD(+) site. Positions 87 and 93 each coordinate substrate. NAD(+)-binding positions include Thr-106, 123–125 (AAN), and Ser-148. 125–128 (NPVD) provides a ligand contact to substrate. Position 153-156 (153-156 (DSAR)) interacts with substrate. Beta-D-fructose 1,6-bisphosphate contacts are provided by Arg-158 and His-173. His-180 (proton acceptor) is an active-site residue. Tyr-225 is modified (phosphotyrosine). Thr-234 is a binding site for substrate.

The protein belongs to the LDH/MDH superfamily. LDH family. Homotetramer.

The protein resides in the cytoplasm. The catalysed reaction is (S)-lactate + NAD(+) = pyruvate + NADH + H(+). It functions in the pathway fermentation; pyruvate fermentation to lactate; (S)-lactate from pyruvate: step 1/1. With respect to regulation, allosterically activated by fructose 1,6-bisphosphate (FBP). Functionally, catalyzes the conversion of lactate to pyruvate. In Latilactobacillus sakei (Lactobacillus sakei), this protein is L-lactate dehydrogenase.